Here is a 156-residue protein sequence, read N- to C-terminus: 6,7-dimethyl-8-ribityllumazine synthase (156 aa).

5-amino-6-(D-ribitylamino)uracil is bound by residues Phe-23, Ala-57 to Glu-59, and Ala-81 to Ile-83. Ala-86 to Thr-87 contributes to the (2S)-2-hydroxy-3-oxobutyl phosphate binding site. His-89 acts as the Proton donor in catalysis. Position 114 (Phe-114) interacts with 5-amino-6-(D-ribitylamino)uracil. Arg-128 is a binding site for (2S)-2-hydroxy-3-oxobutyl phosphate.

This sequence belongs to the DMRL synthase family.

The catalysed reaction is (2S)-2-hydroxy-3-oxobutyl phosphate + 5-amino-6-(D-ribitylamino)uracil = 6,7-dimethyl-8-(1-D-ribityl)lumazine + phosphate + 2 H2O + H(+). Its pathway is cofactor biosynthesis; riboflavin biosynthesis; riboflavin from 2-hydroxy-3-oxobutyl phosphate and 5-amino-6-(D-ribitylamino)uracil: step 1/2. Functionally, catalyzes the formation of 6,7-dimethyl-8-ribityllumazine by condensation of 5-amino-6-(D-ribitylamino)uracil with 3,4-dihydroxy-2-butanone 4-phosphate. This is the penultimate step in the biosynthesis of riboflavin. The sequence is that of 6,7-dimethyl-8-ribityllumazine synthase from Campylobacter concisus (strain 13826).